The sequence spans 337 residues: G-protein coupled receptor 26 (337 aa).

Over 1–10 (MNSWDAGLAG) the chain is Extracellular. A helical membrane pass occupies residues 11-31 (LLVGTIGVSLLSNGLVLLCLL). Over 32–47 (HSADIRRQAPALFTLN) the chain is Cytoplasmic. A helical membrane pass occupies residues 48-68 (LTCGNLLCTVVNMPLTLAGVV). At 69–81 (AQRQPAGDRLCRL) the chain is on the extracellular side. Cys79 and Cys156 form a disulfide bridge. The helical transmembrane segment at 82–102 (AAFLDTFLAANSMLSMAALSI) threads the bilayer. Residues 103-123 (DRWVAVVFPLSYRAKMRLRDA) are Cytoplasmic-facing. A helical transmembrane segment spans residues 124 to 144 (AFMVAYTWLHALTFPATALAL). At 145–168 (SWLGFHQLYASCTLCSRRPDERLR) the chain is on the extracellular side. The chain crosses the membrane as a helical span at residues 169–189 (FAVFTSAFHALSFLLSFIVLC). Residues 190–245 (FTYLKVLKVARFHCKRIDVITMQTLVLLVDIHPSVRERCLEEQKRRRQRATKKIST) are Cytoplasmic-facing. The helical transmembrane segment at 246–266 (FIGTFLVCFAPYVITRLVELF) threads the bilayer. Over 267 to 276 (STAPIDSHWG) the chain is Extracellular. Residues 277–297 (VLSKCLAYSKAASDPFVYSLL) form a helical membrane-spanning segment. Residues 298-337 (RHQYRRSCKELLNRIFNRRSIHSVGLTGDSHSQNILPVSE) are Cytoplasmic-facing.

The protein belongs to the G-protein coupled receptor 1 family. As to expression, detected in extracts of several brain regions including striatum, pons, cerebellum and cortex. Not detected in numerous peripheral tissue extracts, except in testis. In the brain, detected in cortical structures including the anterior cingulate area, posterior cingulate and the frontoparietal, somatosensory and piriform cortices. Prominent also in the olfactory tubercle, the islands of Calleja, ventromedial and posterior nuclei of the hypothalamus, the medial septal nucleus, nucleus of the diagonal band and the ventral tegmental area. Localized also to hippocampal structures, with signals strongest over the CA2 and CA3 regions of Ammon's horn and less so over the dentate gyrus. Expressed in the caudate putamen only in its most caudal portion, with a decreasing gradient of signal from the dorsal to ventral aspect. Strong expression associated with a single pontine structure, the inferior olivary nucleus.

Its subcellular location is the cell membrane. Its function is as follows. Orphan receptor. Displays a significant level of constitutive activity. Its effect is mediated by G(s)-alpha protein that stimulate adenylate cyclase, resulting in an elevation of intracellular cAMP. In Rattus norvegicus (Rat), this protein is G-protein coupled receptor 26 (Gpr26).